The sequence spans 154 residues: 6,7-dimethyl-8-ribityllumazine synthase (154 aa).

Residues Phe-22, 56 to 58 (SFE), and 80 to 82 (AVI) contribute to the 5-amino-6-(D-ribitylamino)uracil site. 85 to 86 (ST) is a binding site for (2S)-2-hydroxy-3-oxobutyl phosphate. His-88 functions as the Proton donor in the catalytic mechanism. Position 113 (Tyr-113) interacts with 5-amino-6-(D-ribitylamino)uracil. Arg-127 contributes to the (2S)-2-hydroxy-3-oxobutyl phosphate binding site.

Belongs to the DMRL synthase family. In terms of assembly, forms an icosahedral capsid composed of 60 subunits, arranged as a dodecamer of pentamers.

The enzyme catalyses (2S)-2-hydroxy-3-oxobutyl phosphate + 5-amino-6-(D-ribitylamino)uracil = 6,7-dimethyl-8-(1-D-ribityl)lumazine + phosphate + 2 H2O + H(+). It participates in cofactor biosynthesis; riboflavin biosynthesis; riboflavin from 2-hydroxy-3-oxobutyl phosphate and 5-amino-6-(D-ribitylamino)uracil: step 1/2. In terms of biological role, catalyzes the formation of 6,7-dimethyl-8-ribityllumazine by condensation of 5-amino-6-(D-ribitylamino)uracil with 3,4-dihydroxy-2-butanone 4-phosphate. This is the penultimate step in the biosynthesis of riboflavin. This is 6,7-dimethyl-8-ribityllumazine synthase from Sulfurihydrogenibium sp. (strain YO3AOP1).